The primary structure comprises 317 residues: Probable cell division protein WhiA (317 aa).

A DNA-binding region (H-T-H motif) is located at residues serine 267–glycine 300.

The protein belongs to the WhiA family.

Functionally, involved in cell division and chromosome segregation. This is Probable cell division protein WhiA from Moorella thermoacetica (strain ATCC 39073 / JCM 9320).